The primary structure comprises 363 residues: S-methylmethionine--homocysteine S-methyltransferase BHMT2 (363 aa).

One can recognise a Hcy-binding domain in the interval 11–305 (KVILERLDSG…YHIRAIAEEL (295 aa)). Zn(2+)-binding residues include cysteine 208, cysteine 290, and cysteine 291.

As to quaternary structure, homotetramer. It depends on Zn(2+) as a cofactor.

The enzyme catalyses S-methyl-L-methionine + L-homocysteine = 2 L-methionine + H(+). Its pathway is amino-acid biosynthesis; L-methionine biosynthesis via de novo pathway; L-methionine from L-homocysteine (BhmT route): step 1/1. Its function is as follows. Involved in the regulation of homocysteine metabolism. Converts betaine and homocysteine to dimethylglycine and methionine, respectively. This reaction is also required for the irreversible oxidation of choline. The protein is S-methylmethionine--homocysteine S-methyltransferase BHMT2 (Bhmt2) of Rattus norvegicus (Rat).